A 511-amino-acid chain; its full sequence is Cobyric acid synthase (511 aa).

Residues 251–443 enclose the GATase cobBQ-type domain; it reads LLDIAIICLP…IHGIFDNDIF (193 aa). The Nucleophile role is filled by Cys-332. Residue His-435 is part of the active site.

Belongs to the CobB/CobQ family. CobQ subfamily.

Its pathway is cofactor biosynthesis; adenosylcobalamin biosynthesis. Its function is as follows. Catalyzes amidations at positions B, D, E, and G on adenosylcobyrinic A,C-diamide. NH(2) groups are provided by glutamine, and one molecule of ATP is hydrogenolyzed for each amidation. This is Cobyric acid synthase from Listeria welshimeri serovar 6b (strain ATCC 35897 / DSM 20650 / CCUG 15529 / CIP 8149 / NCTC 11857 / SLCC 5334 / V8).